We begin with the raw amino-acid sequence, 305 residues long: Serine/threonine-protein phosphatase PP-X homolog 3 (305 aa).

Mn(2+) is bound by residues D53, H55, D81, and N113. The active-site Proton donor is the H114. H163 and H237 together coordinate Mn(2+).

It belongs to the PPP phosphatase family. PP-4 (PP-X) subfamily. Requires Mn(2+) as cofactor.

It carries out the reaction O-phospho-L-seryl-[protein] + H2O = L-seryl-[protein] + phosphate. The catalysed reaction is O-phospho-L-threonyl-[protein] + H2O = L-threonyl-[protein] + phosphate. The sequence is that of Serine/threonine-protein phosphatase PP-X homolog 3 (Ppx3) from Paramecium tetraurelia.